Reading from the N-terminus, the 486-residue chain is Cardiolipin synthase A (486 aa).

The next 2 helical transmembrane spans lie at 3-23 (IFYNLIKCLIFSTYWLLIANI) and 38-58 (MSWLLTIYIIPFIGISIWFFF). PLD phosphodiesterase domains follow at residues 219 to 246 (VDVRQHRKIILIDNYIAYSGSMNLVDPY) and 399 to 426 (QKGLLHSKSILVDQQLSLIGTVNLDMRS). Residues His-224, Lys-226, Asp-231, His-404, Lys-406, and Asp-411 contribute to the active site.

It belongs to the phospholipase D family. Cardiolipin synthase subfamily. ClsA sub-subfamily.

The protein resides in the cell inner membrane. The catalysed reaction is 2 a 1,2-diacyl-sn-glycero-3-phospho-(1'-sn-glycerol) = a cardiolipin + glycerol. Its function is as follows. Catalyzes the reversible phosphatidyl group transfer from one phosphatidylglycerol molecule to another to form cardiolipin (CL) (diphosphatidylglycerol) and glycerol. This chain is Cardiolipin synthase A, found in Buchnera aphidicola subsp. Acyrthosiphon pisum (strain 5A).